The primary structure comprises 391 residues: tRNA-specific 2-thiouridylase MnmA (391 aa).

ATP-binding positions include 20 to 27 (AMSGGVDS) and leucine 46. Cysteine 114 functions as the Nucleophile in the catalytic mechanism. Residues cysteine 114 and cysteine 210 are joined by a disulfide bond. Glycine 138 is a binding site for ATP. The segment at 160–162 (RDQ) is interaction with tRNA. Cysteine 210 serves as the catalytic Cysteine persulfide intermediate.

It belongs to the MnmA/TRMU family.

The protein localises to the cytoplasm. It carries out the reaction S-sulfanyl-L-cysteinyl-[protein] + uridine(34) in tRNA + AH2 + ATP = 2-thiouridine(34) in tRNA + L-cysteinyl-[protein] + A + AMP + diphosphate + H(+). Its function is as follows. Catalyzes the 2-thiolation of uridine at the wobble position (U34) of tRNA, leading to the formation of s(2)U34. This is tRNA-specific 2-thiouridylase MnmA from Bartonella bacilliformis (strain ATCC 35685 / KC583 / Herrer 020/F12,63).